Here is a 285-residue protein sequence, read N- to C-terminus: Troponin T, cardiac muscle (285 aa).

Over residues 1 to 58 (MSDVEEAVEEYEEQEEAAEEEHEEAVEEEAGGEAEAGEPCTAEDGEEEEGREAEDGPV) the composition is skewed to acidic residues. Disordered stretches follow at residues 1–83 (MSDV…GERV) and 111–206 (RKKE…EKKK). Position 2 is an N-acetylserine (S2). S2 carries the phosphoserine; by CK2 modification. Residues 66 to 77 (RPFMPNLVPPKI) show a composition bias toward pro residues. 2 stretches are compositionally biased toward basic and acidic residues: residues 111–171 (RKKE…DEAR) and 190–206 (QTER…EKKK). T191 carries the phosphothreonine; by PKC/PRKCA modification. Residue S195 is modified to Phosphoserine; by PKC/PRKCA. At T200 the chain carries Phosphothreonine; by PKC/PRKCA and RAF1. T281 is modified (phosphothreonine; by PKC/PRKCA).

The protein belongs to the troponin T family. In terms of processing, the N-terminus is blocked. Post-translationally, phosphorylation at Thr-200 by PRKCA induces significant reduction in myofilament calcium sensitivity and actomyosin ATPase activity.

In terms of biological role, troponin T is the tropomyosin-binding subunit of troponin, the thin filament regulatory complex which confers calcium-sensitivity to striated muscle actomyosin ATPase activity. The sequence is that of Troponin T, cardiac muscle (TNNT2) from Bos taurus (Bovine).